Consider the following 417-residue polypeptide: Valine--pyruvate aminotransferase (417 aa).

At K249 the chain carries N6-(pyridoxal phosphate)lysine.

It belongs to the class-I pyridoxal-phosphate-dependent aminotransferase family. Homodimer. Pyridoxal 5'-phosphate is required as a cofactor.

Its subcellular location is the cytoplasm. The enzyme catalyses L-valine + pyruvate = 3-methyl-2-oxobutanoate + L-alanine. In terms of biological role, involved in the biosynthesis of alanine. This is Valine--pyruvate aminotransferase (avtA) from Escherichia coli (strain K12).